We begin with the raw amino-acid sequence, 331 residues long: F-box protein At2g26160 (331 aa).

The 49-residue stretch at 4–52 (PEWSELPGDLINLTANRFSSISDVLRVRSICKPWRSAAATPKSFQCNLP) folds into the F-box domain.

This chain is F-box protein At2g26160, found in Arabidopsis thaliana (Mouse-ear cress).